The chain runs to 1241 residues: ATP-dependent helicase/nuclease subunit A (1241 aa).

The 474-residue stretch at 12–485 (SQWTDDQWKA…IDLAKNFRSR (474 aa)) folds into the UvrD-like helicase ATP-binding domain. 33 to 40 (AAAGSGKT) lines the ATP pocket. The region spanning 505–805 (GEIDYDADAE…RIMTIHKSKG (301 aa)) is the UvrD-like helicase C-terminal domain.

Belongs to the helicase family. AddA subfamily. As to quaternary structure, heterodimer of AddA and AddB/RexB. Requires Mg(2+) as cofactor.

It catalyses the reaction Couples ATP hydrolysis with the unwinding of duplex DNA by translocating in the 3'-5' direction.. The catalysed reaction is ATP + H2O = ADP + phosphate + H(+). Its function is as follows. The heterodimer acts as both an ATP-dependent DNA helicase and an ATP-dependent, dual-direction single-stranded exonuclease. Recognizes the chi site generating a DNA molecule suitable for the initiation of homologous recombination. The AddA nuclease domain is required for chi fragment generation; this subunit has the helicase and 3' -&gt; 5' nuclease activities. In Bacillus cereus (strain B4264), this protein is ATP-dependent helicase/nuclease subunit A.